Here is a 152-residue protein sequence, read N- to C-terminus: uncharacterized protein (152 aa).

The tract at residues 127-152 (EKEKAERKAEKAKKNKKKSSTKTKKK) is disordered. A compositionally biased stretch (basic residues) spans 136 to 152 (EKAKKNKKKSSTKTKKK).

Belongs to the mimivirus R546 family.

This is an uncharacterized protein from Sputnik virophage.